Reading from the N-terminus, the 184-residue chain is Peptidyl-tRNA hydrolase (184 aa).

Tyr-13 is a tRNA binding site. His-18 serves as the catalytic Proton acceptor. Positions 59, 61, and 105 each coordinate tRNA.

The protein belongs to the PTH family. Monomer.

The protein resides in the cytoplasm. The catalysed reaction is an N-acyl-L-alpha-aminoacyl-tRNA + H2O = an N-acyl-L-amino acid + a tRNA + H(+). In terms of biological role, hydrolyzes ribosome-free peptidyl-tRNAs (with 1 or more amino acids incorporated), which drop off the ribosome during protein synthesis, or as a result of ribosome stalling. Catalyzes the release of premature peptidyl moieties from peptidyl-tRNA molecules trapped in stalled 50S ribosomal subunits, and thus maintains levels of free tRNAs and 50S ribosomes. This chain is Peptidyl-tRNA hydrolase, found in Sulfurimonas denitrificans (strain ATCC 33889 / DSM 1251) (Thiomicrospira denitrificans (strain ATCC 33889 / DSM 1251)).